The chain runs to 574 residues: 2-succinyl-5-enolpyruvyl-6-hydroxy-3-cyclohexene-1-carboxylate synthase (574 aa).

The protein belongs to the TPP enzyme family. MenD subfamily. Homodimer. It depends on Mg(2+) as a cofactor. Mn(2+) serves as cofactor. Thiamine diphosphate is required as a cofactor.

The catalysed reaction is isochorismate + 2-oxoglutarate + H(+) = 5-enolpyruvoyl-6-hydroxy-2-succinyl-cyclohex-3-ene-1-carboxylate + CO2. It functions in the pathway quinol/quinone metabolism; 1,4-dihydroxy-2-naphthoate biosynthesis; 1,4-dihydroxy-2-naphthoate from chorismate: step 2/7. Its pathway is cofactor biosynthesis; phylloquinone biosynthesis. Catalyzes the thiamine diphosphate-dependent decarboxylation of 2-oxoglutarate and the subsequent addition of the resulting succinic semialdehyde-thiamine pyrophosphate anion to isochorismate to yield 2-succinyl-5-enolpyruvyl-6-hydroxy-3-cyclohexene-1-carboxylate (SEPHCHC). This Synechococcus sp. (strain RCC307) protein is 2-succinyl-5-enolpyruvyl-6-hydroxy-3-cyclohexene-1-carboxylate synthase.